The sequence spans 440 residues: Ribulose bisphosphate carboxylase large chain (440 aa).

K4 is subject to N6,N6,N6-trimethyllysine. The substrate site is built by N113 and T163. K165 acts as the Proton acceptor in catalysis. K167 provides a ligand contact to substrate. The Mg(2+) site is built by K191, D193, and E194. At K191 the chain carries N6-carboxylysine. The Proton acceptor role is filled by H284. R285, H317, and S369 together coordinate substrate.

This sequence belongs to the RuBisCO large chain family. Type I subfamily. Heterohexadecamer of 8 large chains and 8 small chains; disulfide-linked. The disulfide link is formed within the large subunit homodimers. Mg(2+) serves as cofactor. In terms of processing, the disulfide bond which can form in the large chain dimeric partners within the hexadecamer appears to be associated with oxidative stress and protein turnover.

It is found in the plastid. Its subcellular location is the chloroplast. The catalysed reaction is 2 (2R)-3-phosphoglycerate + 2 H(+) = D-ribulose 1,5-bisphosphate + CO2 + H2O. It carries out the reaction D-ribulose 1,5-bisphosphate + O2 = 2-phosphoglycolate + (2R)-3-phosphoglycerate + 2 H(+). In terms of biological role, ruBisCO catalyzes two reactions: the carboxylation of D-ribulose 1,5-bisphosphate, the primary event in carbon dioxide fixation, as well as the oxidative fragmentation of the pentose substrate in the photorespiration process. Both reactions occur simultaneously and in competition at the same active site. The chain is Ribulose bisphosphate carboxylase large chain from Onoclea sensibilis (Sensitive fern).